We begin with the raw amino-acid sequence, 1328 residues long: ABC transporter G family member 2 (1328 aa).

An ABC transporter 1 domain is found at 53 to 299 (VTARNLSMSI…FEGLGFKLPK (247 aa)). ATP is bound at residue 91 to 98 (GSPGCGKT). The region spanning 388-665 (ISSQVAVRMR…FGMYFFLKNV (278 aa)) is the ABC transmembrane type-2 1 domain. 7 helical membrane passes run 398 to 418 (IIKS…LDLN), 428 to 448 (LIFF…AILF), 477 to 497 (IPIA…MCGL), 504 to 524 (FIYF…FFKM), 534 to 554 (LASV…GFMA), 559 to 579 (IGGW…FEGL), and 642 to 662 (IDLL…YFFL). A disordered region spans residues 670–691 (RASDPKNDKRSKKASKRSKKIK). Over residues 678–689 (KRSKKASKRSKK) the composition is skewed to basic residues. The ABC transporter 2 domain maps to 721–960 (VYEVDVKKDG…DLLGYFENHG (240 aa)). 755-762 (GPSGAGKS) provides a ligand contact to ATP. The ABC transmembrane type-2 2 domain occupies 1049 to 1286 (VRRVQNIRTR…PICPITNGNQ (238 aa)). 6 helical membrane-spanning segments follow: residues 1059-1076 (LMRS…FVRM), 1087-1107 (VSIL…SIPI), 1128-1148 (IYLF…AIIY), 1172-1192 (FISF…ATVL), 1197-1217 (IAHA…GFMI), and 1303-1323 (AVIF…LKFI).

The protein belongs to the ABC transporter superfamily. ABCG family. PDR (TC 3.A.1.205) subfamily.

It is found in the endosome membrane. In terms of biological role, required for endocytosis and endosomal pH regulation. This is ABC transporter G family member 2 (abcG2) from Dictyostelium discoideum (Social amoeba).